A 202-amino-acid chain; its full sequence is Small ribosomal subunit protein uS4c (202 aa).

Residues 90 to 165 (MRLDNILFRL…SQKYKIPNHL (76 aa)) enclose the S4 RNA-binding domain.

The protein belongs to the universal ribosomal protein uS4 family. Part of the 30S ribosomal subunit. Contacts protein S5. The interaction surface between S4 and S5 is involved in control of translational fidelity.

Its subcellular location is the plastid. The protein localises to the chloroplast. One of the primary rRNA binding proteins, it binds directly to 16S rRNA where it nucleates assembly of the body of the 30S subunit. In terms of biological role, with S5 and S12 plays an important role in translational accuracy. In Diphyscium foliosum (Nut-moss), this protein is Small ribosomal subunit protein uS4c (rps4).